The primary structure comprises 355 residues: Glutamyl aminopeptidase (355 aa).

His65 and Asp181 together coordinate a divalent metal cation. Glu213 functions as the Proton acceptor in the catalytic mechanism. 3 residues coordinate a divalent metal cation: Glu214, Asp236, and His319.

The protein belongs to the peptidase M42 family. A divalent metal cation serves as cofactor.

It catalyses the reaction Release of N-terminal glutamate (and to a lesser extent aspartate) from a peptide.. This is Glutamyl aminopeptidase (pepA) from Lactococcus lactis subsp. cremoris (strain MG1363).